A 131-amino-acid polypeptide reads, in one-letter code: Fumarate reductase subunit C (131 aa).

3 helical membrane passes run 30-50 (EGTAVPTVWFSIVLIYGLFAL), 61-81 (IGFLQNPVVVILNLITLAAAL), and 110-130 (IKGLWVVTAVVTVVILFVALF).

This sequence belongs to the FrdC family. Part of an enzyme complex containing four subunits: a flavoprotein (FrdA), an iron-sulfur protein (FrdB), and two hydrophobic anchor proteins (FrdC and FrdD).

The protein localises to the cell inner membrane. Functionally, two distinct, membrane-bound, FAD-containing enzymes are responsible for the catalysis of fumarate and succinate interconversion; fumarate reductase is used in anaerobic growth, and succinate dehydrogenase is used in aerobic growth. Anchors the catalytic components of the fumarate reductase complex to the cell inner membrane, binds quinones. This Klebsiella pneumoniae subsp. pneumoniae (strain ATCC 700721 / MGH 78578) protein is Fumarate reductase subunit C.